Consider the following 338-residue polypeptide: MVVKVGINGFGRIGRIVFRNAIEHDDIHIVAVNDPFIEPKYAAYMLRYDTTHGNFKGTIEVDGADLVVNGKKVKFYTERDPAAIPWSETGADYIVESTGVFTTTEKASAHLKGGAKKVIISAPSADAPMYVMGVNNETYDGSADVISNASCTTNCLAPLAKVIHDNFTIVEGLMTTVHSYTATQKTVDGPSAKDWRGGRTAAQNIIPSSTGAAKAVGKVIPDLNGKLTGMAMRVPTANVSVVDLTARIEKGATYDEIKEVIKKASEGPLAGILAYTEDEVVSSDMNGNPASSIFDAKAGISLNKNFVKLVSWYDNEWGYSRRVLDLISYISKVDAKKA.

NAD(+) contacts are provided by residues 12–13, Asp-34, and Arg-79; that span reads RI. D-glyceraldehyde 3-phosphate contacts are provided by residues 150–152, Thr-181, 210–211, and Arg-233; these read SCT and TG. The active-site Nucleophile is the Cys-151. Asn-315 contacts NAD(+).

It belongs to the glyceraldehyde-3-phosphate dehydrogenase family. As to quaternary structure, homotetramer.

It localises to the cytoplasm. It carries out the reaction D-glyceraldehyde 3-phosphate + phosphate + NAD(+) = (2R)-3-phospho-glyceroyl phosphate + NADH + H(+). The protein operates within carbohydrate degradation; glycolysis; pyruvate from D-glyceraldehyde 3-phosphate: step 1/5. This is Glyceraldehyde-3-phosphate dehydrogenase (gpd-1) from Neurospora crassa (strain ATCC 24698 / 74-OR23-1A / CBS 708.71 / DSM 1257 / FGSC 987).